We begin with the raw amino-acid sequence, 360 residues long: Inward rectifier potassium channel 13 (360 aa).

At 1-50 (MDSSNCKVIAPLLSQRYRRMVTKDGHSTLQMDGAQRGLAYLRDAWGILMD) the chain is on the cytoplasmic side. Residues 51-77 (MRWRWMMLVFSASFVVHWLVFAVLWYV) traverse the membrane as a helical segment. Over 78 to 105 (LAEMNGDLELDHDAPPENHTICVKYITS) the chain is Extracellular. Residues 106-122 (FTAAFSFSLETQLTIGY) constitute an intramembrane region (helical; Pore-forming). A Selectivity filter motif is present at residues 119 to 124 (TIGYGT). The Extracellular portion of the chain corresponds to 123 to 131 (GTMFPSGDC). The chain crosses the membrane as a helical span at residues 132–157 (PSAIALLAIQMLLGLMLEAFITGAFV). Topologically, residues 158–360 (AKIARPKNRA…FQISETGLTE (203 aa)) are cytoplasmic. Phosphoserine; by PKC is present on S201. S287 carries the post-translational modification Phosphoserine; by PKA.

This sequence belongs to the inward rectifier-type potassium channel (TC 1.A.2.1) family. KCNJ13 subfamily. In terms of assembly, homotetramer. Interacts with RAB28; the interaction may facilitate cone outer segments phagocytosis. In terms of processing, phosphorylation at Ser-201 by PKC strongly inhibits ionic currents, while phosphorylation at Ser-287 by PKA increases them. Predominantly expressed in small intestine. Expression is also detected in stomach, kidney, and all central nervous system regions tested with the exception of spinal cord.

It localises to the membrane. It is found in the cell membrane. It catalyses the reaction K(+)(in) = K(+)(out). With respect to regulation, inhibited by Ba(2+) and Cs(+), although sensitivity to those inhibitors is much lower than in other Kir channels. In terms of biological role, inward rectifier potassium channels are characterized by a greater tendency to allow potassium to flow into the cell rather than out of it. Their voltage dependence is regulated by the concentration of extracellular potassium; as external potassium is raised, the voltage range of the channel opening shifts to more positive voltages. The inward rectification is mainly due to the blockage of outward current by internal magnesium. KCNJ13 has a very low single channel conductance, low sensitivity to block by external barium and cesium, and no dependence of its inward rectification properties on the internal blocking particle magnesium. This Homo sapiens (Human) protein is Inward rectifier potassium channel 13 (KCNJ13).